A 261-amino-acid polypeptide reads, in one-letter code: Hydrolase in agr operon (261 aa).

Residues 1–239 form the CN hydrolase domain; the sequence is MKVQIYQLPI…ADILTVDLNL (239 aa). Residue Glu-41 is the Proton acceptor of the active site. Lys-110 acts as the Proton donor in catalysis. The Nucleophile role is filled by Cys-146.

Belongs to the carbon-nitrogen hydrolase superfamily. NIT1/NIT2 family.

In Staphylococcus aureus, this protein is Hydrolase in agr operon.